The following is a 97-amino-acid chain: Aspartyl/glutamyl-tRNA(Asn/Gln) amidotransferase subunit C (97 aa).

The interval 58–78 (LPQGRLRKDTPRDPLDRENAL) is disordered. A compositionally biased stretch (basic and acidic residues) spans 63–77 (LRKDTPRDPLDRENA).

This sequence belongs to the GatC family. Heterotrimer of A, B and C subunits.

The catalysed reaction is L-glutamyl-tRNA(Gln) + L-glutamine + ATP + H2O = L-glutaminyl-tRNA(Gln) + L-glutamate + ADP + phosphate + H(+). It carries out the reaction L-aspartyl-tRNA(Asn) + L-glutamine + ATP + H2O = L-asparaginyl-tRNA(Asn) + L-glutamate + ADP + phosphate + 2 H(+). Allows the formation of correctly charged Asn-tRNA(Asn) or Gln-tRNA(Gln) through the transamidation of misacylated Asp-tRNA(Asn) or Glu-tRNA(Gln) in organisms which lack either or both of asparaginyl-tRNA or glutaminyl-tRNA synthetases. The reaction takes place in the presence of glutamine and ATP through an activated phospho-Asp-tRNA(Asn) or phospho-Glu-tRNA(Gln). The protein is Aspartyl/glutamyl-tRNA(Asn/Gln) amidotransferase subunit C of Saccharolobus islandicus (strain Y.N.15.51 / Yellowstone #2) (Sulfolobus islandicus).